The chain runs to 141 residues: Probable trafficking protein particle complex subunit 2 (141 aa).

Belongs to the TRAPP small subunits family. Sedlin subfamily. In terms of assembly, part of the multisubunit TRAPP (transport protein particle) complex.

The protein resides in the cytoplasm. The protein localises to the perinuclear region. It is found in the endoplasmic reticulum. It localises to the golgi apparatus. Functionally, may play a role in vesicular transport from endoplasmic reticulum to Golgi. Required for the systemic spread of the RNAi response. The chain is Probable trafficking protein particle complex subunit 2 (sedl-1) from Caenorhabditis elegans.